The sequence spans 320 residues: Fe-S cluster assembly protein dre2 (320 aa).

The N-terminal SAM-like domain stretch occupies residues 1 to 130 (MAKQTLLLSP…KPDIEEMQAV (130 aa)). The linker stretch occupies residues 131–213 (PLRLGRKNDH…DNLLDDSELS (83 aa)). Positions 141-166 (LAGAPSLEGSAAEHPFPPEVSEGKTA) are disordered. Positions 222, 233, 236, and 238 each coordinate [2Fe-2S] cluster. The segment at 222–238 (CRPKAGKRRRACKDCTC) is fe-S binding site A. [4Fe-4S] cluster contacts are provided by C283, C286, C294, and C297. Short sequence motifs (cx2C motif) lie at residues 283 to 286 (CGNC) and 294 to 297 (CEGC). The fe-S binding site B stretch occupies residues 283–297 (CGNCSLGDAFRCEGC).

Belongs to the anamorsin family. Monomer. Interacts with tah18. Interacts with mia40. Requires [2Fe-2S] cluster as cofactor. The cofactor is [4Fe-4S] cluster.

Its subcellular location is the cytoplasm. It localises to the mitochondrion intermembrane space. Component of the cytosolic iron-sulfur (Fe-S) protein assembly (CIA) machinery required for the maturation of extramitochondrial Fe-S proteins. Part of an electron transfer chain functioning in an early step of cytosolic Fe-S biogenesis, facilitating the de novo assembly of a [4Fe-4S] cluster on the scaffold complex cfd1-nbp35. Electrons are transferred to dre2 from NADPH via the FAD- and FMN-containing protein tah18. Tah18-dre2 are also required for the assembly of the diferric tyrosyl radical cofactor of ribonucleotide reductase (RNR), probably by providing electrons for reduction during radical cofactor maturation in the catalytic small subunit rnr2. The sequence is that of Fe-S cluster assembly protein dre2 from Neosartorya fischeri (strain ATCC 1020 / DSM 3700 / CBS 544.65 / FGSC A1164 / JCM 1740 / NRRL 181 / WB 181) (Aspergillus fischerianus).